We begin with the raw amino-acid sequence, 1588 residues long: RB1-inducible coiled-coil protein 1 (1588 aa).

Ser-222, Ser-229, and Ser-237 each carry phosphoserine. Residue Thr-238 is modified to Phosphothreonine. A phosphoserine mark is found at Ser-243, Ser-253, Ser-257, and Ser-261. The short motif at 565–568 is the Nuclear localization signal element; it reads KPRK. Phosphoserine is present on residues Ser-623, Ser-646, Ser-649, Ser-652, Ser-733, Ser-1087, Ser-1366, and Ser-1478. Residues 638–674 form a disordered region; it reads QKVSTSQASPQSAASPRIESTTGITTTTSPKTPPPLT. Residues 643–667 show a composition bias toward low complexity; the sequence is SQASPQSAASPRIESTTGITTTTSP. Positions 730–736 match the FFAT motif; it reads DFMSAVN. Coiled coils occupy residues 858-1393 and 1440-1479; these read LKEK…TSSF and SVQE…SQSL.

In terms of assembly, part of a complex containing ATG13/KIAA0652, ULK1 and RB1CC1. This complex associates with ATG101. Interacts with PTK2/FAK1 and PTK2B/PYK2. Interacts with GABARAP and GABARAPL1. Interacts with ATG16L1; the interaction is required for ULK1 complex-dependent autophagy. Interacts with RNF111, SKI and SMAD7. Interacts with COP1 in the cytoplasm of proliferating cells in response to UV stimulation. Interacts with TP53. Interacts with C9orf72. Interacts with WDR45B. Interacts with ATG13; this interaction is increased in the absence of TMEM39A. Interacts with WIPI2. Interacts with TAX1BP1. Interacts (via phosphorylated FFAT motif) with MOSPD2. Post-translationally, phosphorylation at Ser-733 of the FFAT motif activates interaction with MOSPD2. As to expression, expressed abundantly in heart and testis, and moderately in kidney, liver and skeletal muscles. Very low expression levels in lung and spleen. Colocalizes with RB1 in various tissues.

Its subcellular location is the nucleus. It localises to the cytoplasm. The protein localises to the cytosol. It is found in the preautophagosomal structure. The protein resides in the lysosome. Involved in autophagy. Regulates early events but also late events of autophagosome formation through direct interaction with Atg16L1. Required for the formation of the autophagosome-like double-membrane structure that surrounds the Salmonella-containing vacuole (SCV) during S.typhimurium infection and subsequent xenophagy. Involved in repair of DNA damage caused by ionizing radiation, which subsequently improves cell survival by decreasing apoptosis. Inhibits PTK2/FAK1 and PTK2B/PYK2 kinase activity, affecting their downstream signaling pathways. Plays a role as a modulator of TGF-beta-signaling by restricting substrate specificity of RNF111. Functions as a DNA-binding transcription factor. Is a potent regulator of the RB1 pathway through induction of RB1 expression. Plays a crucial role in muscular differentiation. Plays an indispensable role in fetal hematopoiesis and in the regulation of neuronal homeostasis. This chain is RB1-inducible coiled-coil protein 1, found in Mus musculus (Mouse).